The sequence spans 467 residues: Citrate synthase, mitochondrial (467 aa).

Catalysis depends on residues His301 and His347.

Belongs to the citrate synthase family.

It is found in the mitochondrion matrix. The enzyme catalyses oxaloacetate + acetyl-CoA + H2O = citrate + CoA + H(+). It functions in the pathway carbohydrate metabolism; tricarboxylic acid cycle; isocitrate from oxaloacetate: step 1/2. The protein is Citrate synthase, mitochondrial (CIT) of Candida tropicalis (Yeast).